Here is a 438-residue protein sequence, read N- to C-terminus: 2-(3-amino-3-carboxypropyl)histidine synthase subunit 1 (438 aa).

3 residues coordinate [4Fe-4S] cluster: Cys110, Cys214, and Cys342. Ser418 is modified (phosphoserine).

This sequence belongs to the DPH1/DPH2 family. DPH1 subfamily. As to quaternary structure, component of the 2-(3-amino-3-carboxypropyl)histidine synthase complex composed of DPH1, DPH2, DPH3 and a NADH-dependent reductase. Interacts with DPH2 and RBM8A. It depends on [4Fe-4S] cluster as a cofactor.

Its subcellular location is the nucleus. It localises to the cytoplasm. It catalyses the reaction L-histidyl-[translation elongation factor 2] + S-adenosyl-L-methionine = 2-[(3S)-amino-3-carboxypropyl]-L-histidyl-[translation elongation factor 2] + S-methyl-5'-thioadenosine + H(+). Its pathway is protein modification; peptidyl-diphthamide biosynthesis. In terms of biological role, catalyzes the first step of diphthamide biosynthesis, a post-translational modification of histidine which occurs in elongation factor 2. DPH1 and DPH2 transfer a 3-amino-3-carboxypropyl (ACP) group from S-adenosyl-L-methionine (SAM) to a histidine residue, the reaction is assisted by a reduction system comprising DPH3 and a NADH-dependent reductase. This chain is 2-(3-amino-3-carboxypropyl)histidine synthase subunit 1 (DPH1), found in Bos taurus (Bovine).